A 256-amino-acid polypeptide reads, in one-letter code: Triosephosphate isomerase (256 aa).

A substrate-binding site is contributed by 9–11 (NWK). Residue H97 is the Electrophile of the active site. Catalysis depends on E169, which acts as the Proton acceptor. Residues G175, S214, and 235–236 (GG) contribute to the substrate site.

Belongs to the triosephosphate isomerase family. Homodimer.

The protein resides in the cytoplasm. It carries out the reaction D-glyceraldehyde 3-phosphate = dihydroxyacetone phosphate. Its pathway is carbohydrate biosynthesis; gluconeogenesis. The protein operates within carbohydrate degradation; glycolysis; D-glyceraldehyde 3-phosphate from glycerone phosphate: step 1/1. Involved in the gluconeogenesis. Catalyzes stereospecifically the conversion of dihydroxyacetone phosphate (DHAP) to D-glyceraldehyde-3-phosphate (G3P). In Vibrio vulnificus (strain CMCP6), this protein is Triosephosphate isomerase.